The primary structure comprises 185 residues: MSSSFELSVQDLNDLLSDGSGCYSLPSQPCNEVVPRVYVGNASVAQDITQLQKLGITHVLNAAEGRSFMHVNTSASFYEDSGITYLGIKANDTQEFNLSAYFERATDFIDQALAHKNGRVLVHCREGYSRSPTLVIAYLMMRQKMDVKSALSTVRQNREIGPNDGFLAQLCQLNDRLAKEGKVKL.

The region spanning 28-179 is the Tyrosine-protein phosphatase domain; that stretch reads QPCNEVVPRV…LCQLNDRLAK (152 aa). Cysteine 124 (phosphocysteine intermediate) is an active-site residue.

The protein belongs to the protein-tyrosine phosphatase family. Non-receptor class dual specificity subfamily. As to quaternary structure, microtubule inner protein component of sperm flagellar doublet microtubules. Interacts with VRK3; this interaction activates DUSP3 phosphatase activity.

The protein resides in the nucleus. The protein localises to the cytoplasm. Its subcellular location is the cytoskeleton. It localises to the flagellum axoneme. It carries out the reaction O-phospho-L-tyrosyl-[protein] + H2O = L-tyrosyl-[protein] + phosphate. The enzyme catalyses O-phospho-L-seryl-[protein] + H2O = L-seryl-[protein] + phosphate. It catalyses the reaction O-phospho-L-threonyl-[protein] + H2O = L-threonyl-[protein] + phosphate. Its function is as follows. Shows activity both for tyrosine-protein phosphate and serine-protein phosphate, but displays a strong preference toward phosphotyrosines. Specifically dephosphorylates and inactivates ERK1 and ERK2. This chain is Dual specificity protein phosphatase 3 (Dusp3), found in Mus musculus (Mouse).